Consider the following 493-residue polypeptide: MSKVDLWQDATAQAELVRSGEISRTELLEATIAHVQAVNPEINAVIIPLFEKARRESELASGPFAGVPYLLKDLTVVSQGDINTSSIKGMKESGYRADHDAYFVQRMRAAGFVLLGKVNTPEMGTQVTTEPEAWGATRNPWNLGRSVGGSSGGSGAAVAAALSPVAHGNDAAGSVRIPASVCGVVGLKPTRGRISPGPLVTDSDNVAGAAHEGLFARSVRDIAALLDVVSGHRPGDTFCAPTASRPYAQGISENPGSLRVGVLTHNPVGDFALDPECAAAARGAAAALAALGHDVNDAYPEALGDRSFLKDYLTICDVAIAREIERNGELIGRPLTEDDVEWTSWEMVKRADQVTGRAFAACVDELRYYAGKVERWWEAGWDLLILPTVTRQTPEIGELMLAKGTDLEGRHTALISGSLRMLAFTVPFNVSGQPAISLPIGMSSDGMPIGVQIVAAYGREDLLLQVAAQLEGALPWVARRPQLLNPSRKIPAA.

Active-site charge relay system residues include Lys72 and Ser150. Ser174 (acyl-ester intermediate) is an active-site residue.

The protein belongs to the amidase family. As to quaternary structure, homodimer.

The catalysed reaction is 1,8-diazacyclotetradecane-2,9-dione + H2O = N-(6-aminohexanoyl)-6-aminohexanoate. It participates in xenobiotic degradation; nylon-6 oligomer degradation. Its function is as follows. Catalyzes the hydrolysis of 6-aminohexanoic acid cyclic dimer (1,8-diazacyclotetradecane-2,9-dione) to form the linear dimer 6-aminohexanoyl-6-aminohexanoic acid. The protein is 6-aminohexanoate-cyclic-dimer hydrolase (nylA) of Pseudomonas sp. (strain NK87).